Here is a 234-residue protein sequence, read N- to C-terminus: Cytochrome b (234 aa).

A run of 4 helical transmembrane segments spans residues 33–53 (FGSLLGLCLMIQILTGLFLAM), 77–98 (WLIRYLHANGASMFFICLYMHV), 113–133 (WNIGIILLFAVMATAFMGYVL), and 178–198 (FFAFHFILPFIIAALVMIHLL). Heme b contacts are provided by His-83 and His-97. The heme b site is built by His-182 and His-196. His-201 is a binding site for a ubiquinone. A helical membrane pass occupies residues 226–234 (IKDLLGFLV).

It belongs to the cytochrome b family. The cytochrome bc1 complex contains 11 subunits: 3 respiratory subunits (MT-CYB, CYC1 and UQCRFS1), 2 core proteins (UQCRC1 and UQCRC2) and 6 low-molecular weight proteins (UQCRH/QCR6, UQCRB/QCR7, UQCRQ/QCR8, UQCR10/QCR9, UQCR11/QCR10 and a cleavage product of UQCRFS1). This cytochrome bc1 complex then forms a dimer. Heme b serves as cofactor.

It is found in the mitochondrion inner membrane. Component of the ubiquinol-cytochrome c reductase complex (complex III or cytochrome b-c1 complex) that is part of the mitochondrial respiratory chain. The b-c1 complex mediates electron transfer from ubiquinol to cytochrome c. Contributes to the generation of a proton gradient across the mitochondrial membrane that is then used for ATP synthesis. This Lepus arcticus (Arctic hare) protein is Cytochrome b (MT-CYB).